The following is a 232-amino-acid chain: Modulator of macroautophagy TMEM150B (232 aa).

Topologically, residues 1 to 6 (MWAWAL) are cytoplasmic. The helical transmembrane segment at 7–27 (LPVFLAVFGTVGLWAVYAIAV) threads the bilayer. Topologically, residues 28–50 (SNNSVNITIEFPYISTCGAYTPQ) are extracellular. Asparagine 29 and asparagine 33 each carry an N-linked (GlcNAc...) asparagine glycan. Residues 51–71 (SCLFAQICNICCVLALWIVVI) form a helical membrane-spanning segment. The Cytoplasmic portion of the chain corresponds to 72 to 83 (RFQQIRDLGRSS). The helical transmembrane segment at 84 to 104 (HLNTAGLVLGFISSIGISILG) threads the bilayer. The Extracellular portion of the chain corresponds to 105–115 (NFQQTIIQEVH). A helical transmembrane segment spans residues 116–136 (LLGALMAFFLGLAYFWIQAFI). The Cytoplasmic portion of the chain corresponds to 137-153 (TYFSPPSRDNKWLVPVR). Residues 154–174 (FVLCSQCTCMVICMFVLHSTG) form a helical membrane-spanning segment. Residues 175–177 (FRS) lie on the Extracellular side of the membrane. Residues 178–198 (AAAICEWILVMCFFALFGVFA) form a helical membrane-spanning segment. Residues 199–232 (AEFRHIDFHKLTVQKEGLKVANNDNVVWTVQDVQ) lie on the Cytoplasmic side of the membrane.

Belongs to the DRAM/TMEM150 family.

Its subcellular location is the cell membrane. The protein resides in the endosome membrane. It localises to the cytoplasmic vesicle. It is found in the autophagosome membrane. In terms of biological role, modulator of macroautophagy that causes accumulation of autophagosomes under basal conditions and enhances autophagic flux. Represses cell death and promotes long-term clonogenic survival of cells grown in the absence of glucose in a macroautophagy-independent manner. May have some role in extracellular matrix engulfment or growth factor receptor recycling, both of which can modulate cell survival. In Danio rerio (Zebrafish), this protein is Modulator of macroautophagy TMEM150B.